The sequence spans 206 residues: Ribonuclease HII (206 aa).

The region spanning 22–206 (RFICGVDEAG…ISFLKNILSL (185 aa)) is the RNase H type-2 domain. A divalent metal cation is bound by residues Asp-28, Glu-29, and Asp-120.

The protein belongs to the RNase HII family. Mn(2+) serves as cofactor. The cofactor is Mg(2+).

It is found in the cytoplasm. It carries out the reaction Endonucleolytic cleavage to 5'-phosphomonoester.. Functionally, endonuclease that specifically degrades the RNA of RNA-DNA hybrids. The polypeptide is Ribonuclease HII (Caldicellulosiruptor bescii (strain ATCC BAA-1888 / DSM 6725 / KCTC 15123 / Z-1320) (Anaerocellum thermophilum)).